The chain runs to 115 residues: Large ribosomal subunit protein uL22 (115 aa).

It belongs to the universal ribosomal protein uL22 family. In terms of assembly, part of the 50S ribosomal subunit.

Its function is as follows. This protein binds specifically to 23S rRNA; its binding is stimulated by other ribosomal proteins, e.g. L4, L17, and L20. It is important during the early stages of 50S assembly. It makes multiple contacts with different domains of the 23S rRNA in the assembled 50S subunit and ribosome. Functionally, the globular domain of the protein is located near the polypeptide exit tunnel on the outside of the subunit, while an extended beta-hairpin is found that lines the wall of the exit tunnel in the center of the 70S ribosome. The protein is Large ribosomal subunit protein uL22 of Nitrosospira multiformis (strain ATCC 25196 / NCIMB 11849 / C 71).